The primary structure comprises 247 residues: Ubiquinone biosynthesis O-methyltransferase (247 aa).

S-adenosyl-L-methionine is bound by residues R39, G70, D91, and M134.

Belongs to the methyltransferase superfamily. UbiG/COQ3 family.

The enzyme catalyses a 3-demethylubiquinol + S-adenosyl-L-methionine = a ubiquinol + S-adenosyl-L-homocysteine + H(+). It catalyses the reaction a 3-(all-trans-polyprenyl)benzene-1,2-diol + S-adenosyl-L-methionine = a 2-methoxy-6-(all-trans-polyprenyl)phenol + S-adenosyl-L-homocysteine + H(+). The protein operates within cofactor biosynthesis; ubiquinone biosynthesis. O-methyltransferase that catalyzes the 2 O-methylation steps in the ubiquinone biosynthetic pathway. The protein is Ubiquinone biosynthesis O-methyltransferase of Cereibacter sphaeroides (strain KD131 / KCTC 12085) (Rhodobacter sphaeroides).